We begin with the raw amino-acid sequence, 533 residues long: Retinoid isomerohydrolase (533 aa).

Position 2 is an N-acetylserine (Ser2). Residue Cys112 is the site of S-palmitoyl cysteine; in membrane form attachment. His180 is a Fe cation binding site. A lipid anchor (S-palmitoyl cysteine; in membrane form) is attached at Cys231. The Fe cation site is built by His241 and His313. Residues Cys329 and Cys330 are each lipidated (S-palmitoyl cysteine; in membrane form). His527 is a Fe cation binding site.

It belongs to the carotenoid oxygenase family. The cofactor is Fe(2+). Palmitoylation by LRAT regulates ligand binding specificity; the palmitoylated form (membrane form) specifically binds all-trans-retinyl-palmitate, while the soluble unpalmitoylated form binds all-trans-retinol (vitamin A). In terms of tissue distribution, retinal pigment epithelium specific.

Its subcellular location is the cell membrane. It carries out the reaction an all-trans-retinyl ester + H2O = 11-cis-retinol + a fatty acid + H(+). The enzyme catalyses lutein = (3R,3'S)-zeaxanthin. The catalysed reaction is all-trans-retinyl hexadecanoate + H2O = 11-cis-retinol + hexadecanoate + H(+). Critical isomerohydrolase in the retinoid cycle involved in regeneration of 11-cis-retinal, the chromophore of rod and cone opsins. Catalyzes the cleavage and isomerization of all-trans-retinyl fatty acid esters to 11-cis-retinol which is further oxidized by 11-cis retinol dehydrogenase to 11-cis-retinal for use as visual chromophore. Essential for the production of 11-cis retinal for both rod and cone photoreceptors. Also capable of catalyzing the isomerization of lutein to meso-zeaxanthin an eye-specific carotenoid. The soluble form binds vitamin A (all-trans-retinol), making it available for LRAT processing to all-trans-retinyl ester. The membrane form, palmitoylated by LRAT, binds all-trans-retinyl esters, making them available for IMH (isomerohydrolase) processing to all-cis-retinol. The soluble form is regenerated by transferring its palmitoyl groups onto 11-cis-retinol, a reaction catalyzed by LRAT. The chain is Retinoid isomerohydrolase (RPE65) from Cynops pyrrhogaster (Japanese fire-bellied newt).